The sequence spans 383 residues: GTP-binding protein 10 (383 aa).

The Obg domain occupies 13–148 (GNFIDNLRIY…RIIHLDLKLI (136 aa)). Residues 149-344 (SDVGLVGFPN…LIGCIRKTMD (196 aa)) form the OBG-type G domain. Residues 155-162 (GFPNAGKS), 202-206 (DLPGL), and 278-281 (NKMD) contribute to the GTP site. The segment at 362 to 383 (LQKETSRTVKRNLKNSPQRTHH) is disordered. Residues 369–383 (TVKRNLKNSPQRTHH) show a composition bias toward basic residues.

Belongs to the TRAFAC class OBG-HflX-like GTPase superfamily. OBG GTPase family.

Its subcellular location is the nucleus. The protein localises to the nucleolus. In terms of biological role, may be involved in the ribosome maturation process. The sequence is that of GTP-binding protein 10 (gtpbp10) from Xenopus tropicalis (Western clawed frog).